Here is a 147-residue protein sequence, read N- to C-terminus: 6,7-dimethyl-8-ribityllumazine synthase (147 aa).

5-amino-6-(D-ribitylamino)uracil contacts are provided by residues F16, 48-50 (TFD), and 73-75 (AVI). 78-79 (DT) lines the (2S)-2-hydroxy-3-oxobutyl phosphate pocket. Residue H81 is the Proton donor of the active site. L106 serves as a coordination point for 5-amino-6-(D-ribitylamino)uracil. R121 contacts (2S)-2-hydroxy-3-oxobutyl phosphate.

Belongs to the DMRL synthase family.

It carries out the reaction (2S)-2-hydroxy-3-oxobutyl phosphate + 5-amino-6-(D-ribitylamino)uracil = 6,7-dimethyl-8-(1-D-ribityl)lumazine + phosphate + 2 H2O + H(+). It participates in cofactor biosynthesis; riboflavin biosynthesis; riboflavin from 2-hydroxy-3-oxobutyl phosphate and 5-amino-6-(D-ribitylamino)uracil: step 1/2. Catalyzes the formation of 6,7-dimethyl-8-ribityllumazine by condensation of 5-amino-6-(D-ribitylamino)uracil with 3,4-dihydroxy-2-butanone 4-phosphate. This is the penultimate step in the biosynthesis of riboflavin. In Aeropyrum pernix (strain ATCC 700893 / DSM 11879 / JCM 9820 / NBRC 100138 / K1), this protein is 6,7-dimethyl-8-ribityllumazine synthase.